We begin with the raw amino-acid sequence, 138 residues long: CLAVATA3/ESR (CLE)-related protein 2 (138 aa).

An N-terminal signal peptide occupies residues 1–22 (MPNIFKILLIVLLAVVSFRLSA). The segment at 23–90 (STGDKKTAND…VPSHVTNRSM (68 aa)) is required for secretion from the host cytoplasm to the host apoplasm. N37, N87, and N123 each carry an N-linked (GlcNAc...) asparagine glycan. Disordered stretches follow at residues 66–97 (AIGR…PPPV) and 116–138 (LAEK…PHHH). The short motif at 127–138 (RLSPSGPDPHHH) is the CLE element.

It belongs to the CLV3/ESR signal peptide family. Highly expressed exclusively within the dorsal esophageal gland cell during syncytium formation in host plants (at protein level).

It localises to the secreted. Its subcellular location is the host cytoplasm. The protein resides in the host extracellular space. The protein localises to the extracellular space. It is found in the apoplast. Mimics host plant CLE extracellular signal peptides that regulate cell fate. May play a role in the differentiation or division of feeding cells (syncytia) induced in plant roots during infection. The sequence is that of CLAVATA3/ESR (CLE)-related protein 2 (CLE2) from Heterodera glycines (Soybean cyst nematode worm).